The following is a 488-amino-acid chain: MTVETPDFVMPDFSLALPEIWMLVMACVVLVVDLYSQDSRRGMTFMLTQFTLVVAGVLAIVAHWGEPAVTFSGTYVSDNLAAVLKVAIAGLGFLSFAYCRDYLEDRGLLKGEYFVLGLFSLLGMMIMASAHNLMTVYLGLELLALTLYAMVAFNRDNLRATEAAMKYFVLGAIASGILLYGMSLIYGATGSLNLAEVAVYAGEQGANDWLLLLGMTLVVVGVAFKFGAVPFHTWMPDVYQGAPTTVALFASTAPKVAAVALFVRLLSEGLGPIHDQWQPMIILLAVASLVVGNLAALAQTNIKRMLAYSTASHVGFILLGFIAGTAEGYSTALFYAITYGIMSAGAFGLIILLSHRGFEAENISDFKGLNDRSPAMALMMLLLMFSMTGIPGTVGFYAKWLVIKSVVDVGLVWLAVFAVVFAVIGAFYYLRVLKFVYFDKPETDAPPQTGSPAMRGLLVANGIAVLLLGIFPDSLISACMAAFGVSYG.

A run of 14 helical transmembrane segments spans residues 15–35 (LALP…VDLY), 42–62 (GMTF…AIVA), 79–99 (NLAA…FAYC), 108–128 (LLKG…MIMA), 133–153 (LMTV…MVAF), 168–188 (FVLG…IYGA), 209–229 (WLLL…FGAV), 243–263 (PTTV…ALFV), 277–297 (WQPM…LAAL), 305–325 (MLAY…IAGT), 333–353 (LFYA…IILL), 376–396 (MALM…TVGF), 409–429 (VGLV…AFYY), and 456–476 (GLLV…DSLI).

The protein belongs to the complex I subunit 2 family. As to quaternary structure, NDH-1 is composed of 14 different subunits. Subunits NuoA, H, J, K, L, M, N constitute the membrane sector of the complex.

The protein localises to the cell inner membrane. It catalyses the reaction a quinone + NADH + 5 H(+)(in) = a quinol + NAD(+) + 4 H(+)(out). Its function is as follows. NDH-1 shuttles electrons from NADH, via FMN and iron-sulfur (Fe-S) centers, to quinones in the respiratory chain. The immediate electron acceptor for the enzyme in this species is believed to be ubiquinone. Couples the redox reaction to proton translocation (for every two electrons transferred, four hydrogen ions are translocated across the cytoplasmic membrane), and thus conserves the redox energy in a proton gradient. In Alkalilimnicola ehrlichii (strain ATCC BAA-1101 / DSM 17681 / MLHE-1), this protein is NADH-quinone oxidoreductase subunit N.